Consider the following 306-residue polypeptide: MGRIARGSKMSSLIVSLLVVLVSLNLASETTAKYTYSSPPPPEHSPPPPEHSPPPPYHYESPPPPKHSPPPPTPVYKYKSPPPPMHSPPPPYHFESPPPPKHSPPPPTPVYKYKSPPPPKHSPAPVHHYKYKSPPPPTPVYKYKSPPPPKHSPAPEHHYKYKSPPPPKHFPAPEHHYKYKYKSPPPPTPVYKYKSPPPPTPVYKYKSPPPPKHSPAPVHHYKYKSPPPPTPVYKSPPPPEHSPPPPTPVYKYKSPPPPMHSPPPPTPVYKYKSPPPPMHSPPPPVYSPPPPKHHYSYTSPPPPHHY.

A signal peptide spans 1–32 (MGRIARGSKMSSLIVSLLVVLVSLNLASETTA). The segment at 33-306 (KYTYSSPPPP…YTSPPPPHHY (274 aa)) is disordered. Composition is skewed to pro residues over residues 38 to 122 (SPPP…PKHS), 133 to 152 (SPPPPTPVYKYKSPPPPKHS), 183 to 214 (SPPPPTPVYKYKSPPPPTPVYKYKSPPPPKHS), and 225 to 290 (SPPP…SPPP).

In terms of processing, hydroxylated on proline residues in the S-P-P-P-P repeat. O-glycosylated on hydroxyprolines.

Its subcellular location is the secreted. The protein localises to the primary cell wall. Functionally, structural component in primary cell wall. The chain is Extensin from Daucus carota (Wild carrot).